Consider the following 619-residue polypeptide: Translation initiation factor eIF2B subunit delta (619 aa).

Residues 21 to 32 (GDYLDSKQEGKP) are compositionally biased toward basic and acidic residues. The tract at residues 21 to 251 (GDYLDSKQEG…PKQRGKITKK (231 aa)) is disordered. Residues 42–56 (TNTSPVSIPTIISPP) are compositionally biased toward low complexity. Polar residues predominate over residues 57-84 (LGSNNSNYGKSPKSSYDNKQTSPLLSAS). A compositionally biased stretch (low complexity) spans 85 to 98 (NNRKNNNNNNNNNN). Positions 99–125 (ATSPKDSSIIGKNNVNSDLSKVSSSLN) are enriched in polar residues. Low complexity predominate over residues 136–199 (STSSTPTSTP…KQQSKQQATQ (64 aa)). The segment covering 200 to 244 (QDKKDKEQQQQQQDKQDKESNEIKGSKEVAKDGQHGVKQFDDPKQ) has biased composition (basic and acidic residues).

It belongs to the eIF-2B alpha/beta/delta subunits family. Component of the translation initiation factor 2B (eIF2B) complex which is a heterodecamer of two sets of five different subunits: alpha, beta, gamma, delta and epsilon. Subunits alpha, beta and delta comprise a regulatory subcomplex and subunits epsilon and gamma comprise a catalytic subcomplex. Within the complex, the hexameric regulatory complex resides at the center, with the two heterodimeric catalytic subcomplexes bound on opposite sides.

It localises to the cytoplasm. Its subcellular location is the cytosol. Its function is as follows. Acts as a component of the translation initiation factor 2B (eIF2B) complex, which catalyzes the exchange of GDP for GTP on eukaryotic initiation factor 2 (eIF2) gamma subunit. Its guanine nucleotide exchange factor activity is repressed when bound to eIF2 complex phosphorylated on the alpha subunit, thereby limiting the amount of methionyl-initiator methionine tRNA available to the ribosome and consequently global translation is repressed. The polypeptide is Translation initiation factor eIF2B subunit delta (eif2b4) (Dictyostelium discoideum (Social amoeba)).